The chain runs to 162 residues: Glycine cleavage system H protein, mitochondrial (162 aa).

The transit peptide at 1 to 31 directs the protein to the mitochondrion; it reads MALRMWASSTANALRLSSATRPHFSPLSRCF. The region spanning 53–135 is the Lipoyl-binding domain; it reads VATIGITDHA…YEDGWMIKVK (83 aa). K94 carries the post-translational modification N6-lipoyllysine.

It belongs to the GcvH family. As to quaternary structure, the glycine cleavage system is composed of four proteins: P, T, L and H. It depends on (R)-lipoate as a cofactor.

The protein resides in the mitochondrion. Functionally, the glycine cleavage system catalyzes the degradation of glycine. The H protein shuttles the methylamine group of glycine from the P protein to the T protein. This is Glycine cleavage system H protein, mitochondrial (GDCSH) from Flaveria anomala (Yellowtops).